We begin with the raw amino-acid sequence, 269 residues long: tRNA pseudouridine synthase A (269 aa).

Aspartate 52 (nucleophile) is an active-site residue. Residue tyrosine 110 participates in substrate binding.

Belongs to the tRNA pseudouridine synthase TruA family. Homodimer.

The enzyme catalyses uridine(38/39/40) in tRNA = pseudouridine(38/39/40) in tRNA. Formation of pseudouridine at positions 38, 39 and 40 in the anticodon stem and loop of transfer RNAs. The polypeptide is tRNA pseudouridine synthase A (Bacteroides thetaiotaomicron (strain ATCC 29148 / DSM 2079 / JCM 5827 / CCUG 10774 / NCTC 10582 / VPI-5482 / E50)).